We begin with the raw amino-acid sequence, 173 residues long: Bifunctional protein PyrR (173 aa).

Residues 93–105 (VILIDDVLYTGRT) carry the PRPP-binding motif.

It belongs to the purine/pyrimidine phosphoribosyltransferase family. PyrR subfamily. As to quaternary structure, homodimer and homohexamer; in equilibrium.

It catalyses the reaction UMP + diphosphate = 5-phospho-alpha-D-ribose 1-diphosphate + uracil. In terms of biological role, regulates transcriptional attenuation of the pyrimidine nucleotide (pyr) operon by binding in a uridine-dependent manner to specific sites on pyr mRNA. This disrupts an antiterminator hairpin in the RNA and favors formation of a downstream transcription terminator, leading to a reduced expression of downstream genes. Also displays a weak uracil phosphoribosyltransferase activity which is not physiologically significant. In Streptococcus pyogenes serotype M12 (strain MGAS2096), this protein is Bifunctional protein PyrR.